We begin with the raw amino-acid sequence, 485 residues long: Glutamyl-tRNA(Gln) amidotransferase subunit A (485 aa).

Residues Lys79 and Ser154 each act as charge relay system in the active site. The active-site Acyl-ester intermediate is the Ser178.

The protein belongs to the amidase family. GatA subfamily. Heterotrimer of A, B and C subunits.

It carries out the reaction L-glutamyl-tRNA(Gln) + L-glutamine + ATP + H2O = L-glutaminyl-tRNA(Gln) + L-glutamate + ADP + phosphate + H(+). In terms of biological role, allows the formation of correctly charged Gln-tRNA(Gln) through the transamidation of misacylated Glu-tRNA(Gln) in organisms which lack glutaminyl-tRNA synthetase. The reaction takes place in the presence of glutamine and ATP through an activated gamma-phospho-Glu-tRNA(Gln). In Clostridium botulinum (strain Alaska E43 / Type E3), this protein is Glutamyl-tRNA(Gln) amidotransferase subunit A.